The chain runs to 751 residues: MLPGLALLLLAAWTARALEVPTDGNAGLLAEPQIAMFCGRLNMHMNVQNGKWDSDPSGTKTCIDTKEGILQYCQEVYPELQITNVVEANQPVTIQNWCKRDRKQCKTHPHIVIPYRCLVGEFVSDALLVPDKCKFLHQERMDVCETHLHWHTVAKETCSEKSTNLHDYGMLLPCGIDKFRGVEFVCCPLAEESDHVDSADAEEDDSDVWWGGADTDYADGSEDKVVEVAEEEEVAEVEEEEADDDEDDEDGDEVEEEAEEPYEEATERTTSIATTTTTTTESVEEVVREVCSEQAETGPCRAMISRWYFDVTEGKCAPFFYGGCGGNRNNFDTEEYCMAVCGSVIPTTAASTPDAVDKYLETPGDENEHAHFQKAKERLEAKHRERMSQVMREWEEAERQAKNLPKADKKAVIQHFQEKVESLEQEAANERQQLVETHMARVEAMLNDRRRLALENYITALQAVPPRPRHVFNMLKKYVRAEQKDRQHTLKHFEHVRMVDPKKAAQIRSQVMTHLRVIYERMNQSLSLLYNVPAVAEEIQDEVDELLQKEQNYSDDVLANMISEPRISYGNDALMPSLTETKTTVELLPVNGEFSLDDLQPWHSFGADSVPANTENEVEPVDARPAADRGLTTRPGSGLTNIKTEEISEVKMDAEFRHDSGYEVHHQKLVFFAEDVGSNKGAIIGLMVGGVVIATVIVITLVMLKKKQYTSIHHGVVEVDAAVTPEERHLSKMQQNGYENPTYKFFEQMQN.

An N-terminal signal peptide occupies residues 1-17 (MLPGLALLLLAAWTARA). Topologically, residues 18–682 (LEVPTDGNAG…AEDVGSNKGA (665 aa)) are extracellular. The GFLD subdomain stretch occupies residues 28-123 (LLAEPQIAMF…PYRCLVGEFV (96 aa)). The region spanning 28-189 (LLAEPQIAMF…RGVEFVCCPL (162 aa)) is the E1 domain. 6 disulfide bridges follow: C38/C62, C73/C117, C98/C105, C133/C187, C144/C174, and C158/C186. 96–110 (NWCKRDRKQCKTHPH) serves as a coordination point for heparin. Residues 131–189 (DKCKFLHQERMDVCETHLHWHTVAKETCSEKSTNLHDYGMLLPCGIDKFRGVEFVCCPL) form a cuBD subdomain region. Residues H147, H151, and Y168 each coordinate Cu(2+). The zinc-binding stretch occupies residues 181–188 (GVEFVCCP). Positions 183, 186, and 187 each coordinate Zn(2+). The interval 195 to 284 (HVDSADAEED…TTTTTTESVE (90 aa)) is disordered. Phosphoserine; by CK1 and CK2 occurs at positions 198 and 206. 2 positions are modified to sulfotyrosine: Y217 and Y262. The segment covering 228-264 (VAEEEEVAEVEEEEADDDEDDEDGDEVEEEAEEPYEE) has biased composition (acidic residues). Low complexity predominate over residues 268–281 (RTTSIATTTTTTTE). Cystine bridges form between C291–C341, C300–C324, and C316–C337. Positions 291–341 (CSEQAETGPCRAMISRWYFDVTEGKCAPFFYGGCGGNRNNFDTEEYCMAVC) constitute a BPTI/Kunitz inhibitor domain. Heparin-binding regions lie at residues 316-344 (CAPF…CGSV) and 363-428 (PGDE…QEAA). Y336 is modified (sulfotyrosine). The OX-2 signature appears at 344–346 (VIP). An E2 domain is found at 355–546 (AVDKYLETPG…EEIQDEVDEL (192 aa)). S422 is modified (phosphoserine). Y478 is modified (phosphotyrosine). The tract at residues 504–521 (AAQIRSQVMTHLRVIYER) is collagen-binding. N-linked (GlcNAc...) asparagine glycosylation is found at N523 and N552. Cu(2+)-binding residues include H658, Y662, H665, and H666. Zn(2+) contacts are provided by H658, Y662, H665, and H666. The interval 676–703 (VGSNKGAIIGLMVGGVVIATVIVITLVM) is interaction with PSEN1. Residues 683–703 (IIGLMVGGVVIATVIVITLVM) traverse the membrane as a helical segment. The Cytoplasmic segment spans residues 704–751 (LKKKQYTSIHHGVVEVDAAVTPEERHLSKMQQNGYENPTYKFFEQMQN). Positions 705-715 (KKKQYTSIHHG) match the Basolateral sorting signal motif. T710 is modified (phosphothreonine). S711 is subject to Phosphoserine; by APP-kinase I. The tract at residues 713–732 (HHGVVEVDAAVTPEERHLSK) is interaction with G(o)-alpha. At T724 the chain carries Phosphothreonine; by CDK5 and MAPK10. Positions 737-751 (GYENPTYKFFEQMQN) are required for the interaction with KIF5B and for anterograde transport in axons. At Y738 the chain carries Phosphotyrosine; by ABL1. The short motif at 738–743 (YENPTY) is the YENPXY motif; contains endocytosis signal element. K744 is covalently cross-linked (Glycyl lysine isopeptide (Lys-Gly) (interchain with G-Cter in ubiquitin)).

It belongs to the APP family. In terms of assembly, binds, via its C-terminus, to the PID domain of several cytoplasmic proteins, including APBB family members, the APBA family, MAPK8IP1, SHC1 and NUMB and DAB1. Binding to DAB1 inhibits its serine phosphorylation. Interacts (via NPXY motif) with DAB2 (via PID domain); the interaction is impaired by tyrosine phosphorylation of the NPXY motif. Also interacts with GPCR-like protein BPP, APPBP1, IB1, KNS2 (via its TPR domains), APPBP2 (via BaSS) and DDB1. In vitro, it binds MAPT via the MT-binding domains. Associates with microtubules in the presence of ATP and in a kinesin-dependent manner. Interacts, through a C-terminal domain, with GNAO1. Amyloid-beta protein 42 binds CHRNA7 in hippocampal neurons. Amyloid-beta associates with HADH2. Interacts with CPEB1, ANKS1B and AGER. Interacts with ITM2B. Interacts with ITM2C. Interacts with IDE. Can form homodimers; dimerization is enhanced in the presence of Cu(2+) ions. Can form homodimers; this is promoted by heparin binding. Amyloid-beta protein 40 interacts with S100A9. CTF-alpha product of APP interacts with GSAP. Isoform APP695 interacts with SORL1 (via N-terminal ectodomain); this interaction retains APP in the trans-Golgi network and reduces processing into soluble APP-alpha and amyloid-beta peptides. Isoform APP770 interacts with SORL1. The C99 fragment also interacts with SORL1. Interacts with PLD3. Interacts with VDAC1. Interacts with NSG1; could regulate APP processing. Amyloid-beta protein 42 interacts with FPR2. Interacts (via transmembrane region) with PSEN1; the interaction is direct. Interacts with LRRK2. Interacts (via cytoplasmic domain) with KIF5B. Interacts (via C-terminus) with APBB2/FE65L1 (via C-terminus). Interacts (via intracellular domain) with APBB3. In terms of processing, proteolytically processed under normal cellular conditions. Cleavage either by alpha-secretase, beta-secretase or theta-secretase leads to generation and extracellular release of soluble APP peptides, S-APP-alpha and S-APP-beta, and the retention of corresponding membrane-anchored C-terminal fragments, C80, C83 and C99. Subsequent processing of C80 and C83 by gamma-secretase yields P3 peptides. This is the major secretory pathway and is non-amyloidogenic. Alternatively, presenilin/nicastrin-mediated gamma-secretase processing of C99 releases the amyloid-beta proteins, amyloid-beta protein 40 and amyloid-beta protein 42, major components of amyloid plaques, and the cytotoxic C-terminal fragments, gamma-CTF(50), gamma-CTF(57) and gamma-CTF(59). PSEN1 cleavage is more efficient with C83 than with C99 as substrate (in vitro). Amyloid-beta protein 40 and Amyloid-beta protein 42 are cleaved by ACE. Many other minor amyloid-beta peptides, amyloid-beta 1-X peptides, are found in cerebral spinal fluid (CSF) including the amyloid-beta X-15 peptides, produced from the cleavage by alpha-secretase. Proteolytically cleaved by caspases during neuronal apoptosis. Cleavage at Asp-720 by either caspase-3, -8 or -9 results in the production of the neurotoxic C31 peptide and the increased production of amyloid-beta peptides. Post-translationally, N- and O-glycosylated. In terms of processing, phosphorylation in the C-terminal on tyrosine, threonine and serine residues is neuron-specific. Phosphorylation can affect APP processing, neuronal differentiation and interaction with other proteins. Phosphorylated on Thr-724 in neuronal cells by Cdc5 kinase and Mapk10, in dividing cells by Cdc2 kinase in a cell-cycle dependent manner with maximal levels at the G2/M phase and, in vitro, by GSK-3-beta. The Thr-724 phosphorylated form causes a conformational change which reduces binding of Fe65 family members. In dopaminergic (DA) neurons, phosphorylation on Thr-724 by LRKK2 promotes the production and the nuclear translocation of the APP intracellular domain (AICD) which induces DA neuron apoptosis. Phosphorylation on Tyr-738 is required for SHC binding. Phosphorylated in the extracellular domain by casein kinases on both soluble and membrane-bound APP. This phosphorylation is inhibited by heparin. Trophic-factor deprivation triggers the cleavage of surface APP by beta-secretase to release sAPP-beta which is further cleaved to release an N-terminal fragment of APP (N-APP). Post-translationally, amyloid-beta peptides are degraded by IDE. In terms of processing, sulfated on tyrosine residues.

The protein resides in the cell membrane. It is found in the membrane. The protein localises to the perikaryon. It localises to the cell projection. Its subcellular location is the growth cone. The protein resides in the clathrin-coated pit. It is found in the early endosome. The protein localises to the cytoplasmic vesicle. It localises to the endoplasmic reticulum. Its subcellular location is the golgi apparatus. The protein resides in the secreted. It is found in the cell surface. The protein localises to the nucleus. It localises to the cytoplasm. Functionally, functions as a cell surface receptor and performs physiological functions on the surface of neurons relevant to neurite growth, neuronal adhesion and axonogenesis. Interaction between APP molecules on neighboring cells promotes synaptogenesis. Involved in cell mobility and transcription regulation through protein-protein interactions. Can promote transcription activation through binding to APBB1-KAT5 and inhibit Notch signaling through interaction with Numb. Couples to apoptosis-inducing pathways such as those mediated by G(o) and JIP. Inhibits G(o)-alpha ATPase activity. Acts as a kinesin I membrane receptor, mediating the axonal transport of beta-secretase and presenilin 1. By acting as a kinesin I membrane receptor, plays a role in axonal anterograde transport of cargo towards synapses in axons. May be involved in copper homeostasis/oxidative stress through copper ion reduction. In vitro, copper-metallated APP induces neuronal death directly or is potentiated through Cu(2+)-mediated low-density lipoprotein oxidation. Can regulate neurite outgrowth through binding to components of the extracellular matrix such as heparin and collagen I and IV. Induces a AGER-dependent pathway that involves activation of p38 MAPK, resulting in internalization of amyloid-beta peptide and mitochondrial dysfunction in cultured cortical neurons. Provides Cu(2+) ions for GPC1 which are required for release of nitric oxide (NO) and subsequent degradation of the heparan sulfate chains on GPC1. Its function is as follows. Amyloid-beta peptides are lipophilic metal chelators with metal-reducing activity. Binds transient metals such as copper, zinc and iron. The gamma-CTF peptides as well as the caspase-cleaved peptides, including C31, are potent enhancers of neuronal apoptosis. In Saimiri sciureus (Common squirrel monkey), this protein is Amyloid-beta precursor protein.